The primary structure comprises 128 residues: Small ribosomal subunit protein uS13 (128 aa).

A compositionally biased stretch (basic residues) spans 95 to 118 (GLPVRGQRTHTNARTRKGPKKGLV). A disordered region spans residues 95-128 (GLPVRGQRTHTNARTRKGPKKGLVRKAAAPAPKA).

This sequence belongs to the universal ribosomal protein uS13 family. In terms of assembly, part of the 30S ribosomal subunit. Forms a loose heterodimer with protein S19. Forms two bridges to the 50S subunit in the 70S ribosome.

Located at the top of the head of the 30S subunit, it contacts several helices of the 16S rRNA. In the 70S ribosome it contacts the 23S rRNA (bridge B1a) and protein L5 of the 50S subunit (bridge B1b), connecting the 2 subunits; these bridges are implicated in subunit movement. Contacts the tRNAs in the A and P-sites. This is Small ribosomal subunit protein uS13 from Anaeromyxobacter sp. (strain K).